The sequence spans 358 residues: Protein IncC (358 aa).

Positions 1-101 (MGAIHEETAN…VGSRRQEETG (101 aa)) are disordered. Positions 88 to 99 (HRQEVGSRRQEE) are enriched in basic and acidic residues.

Belongs to the ParA family.

Its function is as follows. This is one of the proteins encoded by the trfB operon; it is involved in plasmid maintenance and replication. The chain is Protein IncC (incC) from Escherichia coli.